Reading from the N-terminus, the 472-residue chain is Ribulose bisphosphate carboxylase large chain 1 (472 aa).

Substrate is bound by residues Asn-115 and Thr-165. The active-site Proton acceptor is the Lys-167. Substrate is bound at residue Lys-169. Mg(2+)-binding residues include Lys-193, Asp-195, and Glu-196. Lys-193 is subject to N6-carboxylysine. His-286 (proton acceptor) is an active-site residue. Arg-287, His-319, and Ser-371 together coordinate substrate.

The protein belongs to the RuBisCO large chain family. Type I subfamily. As to quaternary structure, heterohexadecamer of 8 large chains and 8 small chains. Requires Mg(2+) as cofactor.

The enzyme catalyses 2 (2R)-3-phosphoglycerate + 2 H(+) = D-ribulose 1,5-bisphosphate + CO2 + H2O. It catalyses the reaction D-ribulose 1,5-bisphosphate + O2 = 2-phosphoglycolate + (2R)-3-phosphoglycerate + 2 H(+). RuBisCO catalyzes two reactions: the carboxylation of D-ribulose 1,5-bisphosphate, the primary event in carbon dioxide fixation, as well as the oxidative fragmentation of the pentose substrate. Both reactions occur simultaneously and in competition at the same active site. The polypeptide is Ribulose bisphosphate carboxylase large chain 1 (Rhodopseudomonas palustris (strain BisB5)).